Consider the following 334-residue polypeptide: HTH-type transcriptional repressor PurR (334 aa).

One can recognise an HTH lacI-type domain in the interval 2-56; it reads ATIKDVARMAGVSTTTVSHVINKTRFVAEATQKKVLAAVDDLNYAPSAVARSLKC. A DNA-binding region (H-T-H motif) is located at residues 4–23; the sequence is IKDVARMAGVSTTTVSHVIN. Residues 48 to 56 mediate DNA binding; that stretch reads SAVARSLKC. Hypoxanthine contacts are provided by Phe73, Lys189, Thr191, Phe220, and Asp274.

As to quaternary structure, homodimer.

Its pathway is purine metabolism; purine nucleotide biosynthesis [regulation]. Its function is as follows. Is the main repressor of the genes involved in the de novo synthesis of purine nucleotides, regulating purB, purC, purEK, purF, purHD, purL, purMN and guaBA expression. PurR is allosterically activated to bind its cognate DNA by binding the purine corepressors, hypoxanthine or guanine, thereby effecting transcription repression. The sequence is that of HTH-type transcriptional repressor PurR from Photobacterium profundum (strain SS9).